The chain runs to 241 residues: Eukaryotic translation initiation factor 3 subunit J (241 aa).

A disordered region spans residues 1-94 (MDVSWDADNF…EKTAEEMTPE (94 aa)). Residues 26–45 (GEDEDDNVKESWEDEEEEKK) are compositionally biased toward acidic residues. Residues 61-118 (KKKIHDKIAERERQEREKAERLVTEKTAEEMTPEQKLAEKLRQQKLQEESDLRLAMET) adopt a coiled-coil conformation. Residues 66-89 (DKIAERERQEREKAERLVTEKTAE) show a composition bias toward basic and acidic residues.

The protein belongs to the eIF-3 subunit J family. Component of the eukaryotic translation initiation factor 3 (eIF-3) complex.

Its subcellular location is the cytoplasm. Its function is as follows. Component of the eukaryotic translation initiation factor 3 (eIF-3) complex, which is involved in protein synthesis of a specialized repertoire of mRNAs and, together with other initiation factors, stimulates binding of mRNA and methionyl-tRNAi to the 40S ribosome. The eIF-3 complex specifically targets and initiates translation of a subset of mRNAs involved in cell proliferation. In Bombyx mori (Silk moth), this protein is Eukaryotic translation initiation factor 3 subunit J.